The chain runs to 217 residues: MAHDQPLLVVQEALRKCFPVVEEQQNLWQSTLQDCSPLLSSLSNLAEQLQAAQSLRFEDVPALRPFPDLQERLRRKQLEAGDVVLDKLAERLATLLKVRNTINSHVEQVFQAYEQHAAVLDIDTVLRPSVVSPSVADMLEWLQDIDRHYGSSYLKRKYLLSSIHWGDLASIQALPKAWDQISENECQTLVSDVLVSVSFFLEEPGGCAASGDLEHHS.

As to quaternary structure, part of the 55LCC heterohexameric ATPase complex composed at least of AIRIM, AFG2A, AFG2B and CINP. Does not associate with pre-60S ribosomal particles. Phosphorylated on serines by CK2 kinase.

It is found in the nucleus. The protein resides in the cytoplasm. Part of the 55LCC heterohexameric ATPase complex which is chromatin-associated and promotes replisome proteostasis to maintain replication fork progression and genome stability. Required for replication fork progression, sister chromatid cohesion, and chromosome stability. The ATPase activity is specifically enhanced by replication fork DNA and is coupled to cysteine protease-dependent cleavage of replisome substrates in response to replication fork damage. Uses ATPase activity to process replisome substrates in S-phase, facilitating their proteolytic turnover from chromatin to ensure DNA replication and mitotic fidelity. Involved in the cytoplasmic maturation steps of pre-60S ribosomal particles by promoting the release of shuttling protein RSL24D1/RLP24 from the pre-ribosomal particles. The chain is AFG2-interacting ribosome maturation factor (Airim) from Mus musculus (Mouse).